Consider the following 210-residue polypeptide: Cytochrome c oxidase subunit 2 (210 aa).

The Mitochondrial intermembrane segment spans residues methionine 1–serine 15. Residues isoleucine 16–alanine 36 traverse the membrane as a helical segment. Residues threonine 37–tryptophan 63 are Mitochondrial matrix-facing. The helical transmembrane segment at phenylalanine 64–phenylalanine 84 threads the bilayer. Residues serine 85 to isoleucine 210 are Mitochondrial intermembrane-facing. Cu cation contacts are provided by histidine 157, cysteine 192, glutamate 194, cysteine 196, histidine 200, and methionine 203. Mg(2+) is bound at residue glutamate 194.

Belongs to the cytochrome c oxidase subunit 2 family. In terms of assembly, component of the cytochrome c oxidase (complex IV, CIV), a multisubunit enzyme composed of a catalytic core of 3 subunits and several supernumerary subunits. The complex exists as a monomer or a dimer and forms supercomplexes (SCs) in the inner mitochondrial membrane with ubiquinol-cytochrome c oxidoreductase (cytochrome b-c1 complex, complex III, CIII). Cu cation is required as a cofactor.

It is found in the mitochondrion inner membrane. It carries out the reaction 4 Fe(II)-[cytochrome c] + O2 + 8 H(+)(in) = 4 Fe(III)-[cytochrome c] + 2 H2O + 4 H(+)(out). In terms of biological role, component of the cytochrome c oxidase, the last enzyme in the mitochondrial electron transport chain which drives oxidative phosphorylation. The respiratory chain contains 3 multisubunit complexes succinate dehydrogenase (complex II, CII), ubiquinol-cytochrome c oxidoreductase (cytochrome b-c1 complex, complex III, CIII) and cytochrome c oxidase (complex IV, CIV), that cooperate to transfer electrons derived from NADH and succinate to molecular oxygen, creating an electrochemical gradient over the inner membrane that drives transmembrane transport and the ATP synthase. Cytochrome c oxidase is the component of the respiratory chain that catalyzes the reduction of oxygen to water. Electrons originating from reduced cytochrome c in the intermembrane space (IMS) are transferred via the dinuclear copper A center (CU(A)) of subunit 2 and heme A of subunit 1 to the active site in subunit 1, a binuclear center (BNC) formed by heme A3 and copper B (CU(B)). The BNC reduces molecular oxygen to 2 water molecules using 4 electrons from cytochrome c in the IMS and 4 protons from the mitochondrial matrix. The protein is Cytochrome c oxidase subunit 2 (COXII) of Trypanosoma brucei brucei.